Consider the following 102-residue polypeptide: MAGQAFRKFLPLFDRVLVERSAAETVTKGGIMLPEKSQGKVLQATVVAVGSGSKGKGGEIQPVSVKVGDKVLLPEYGGTKVVLDDKDYFLFRDGDILGKYVD.

Ala2 is modified (N-acetylalanine). Lys8 bears the N6-acetyllysine mark. Lys28 bears the N6-succinyllysine mark. Lys40 bears the N6-acetyllysine; alternate mark. Residues Lys40, Lys54, and Lys56 each carry the N6-malonyllysine; alternate modification. 5 positions are modified to N6-succinyllysine; alternate: Lys40, Lys54, Lys56, Lys66, and Lys70. 3 positions are modified to N6-acetyllysine; alternate: Lys56, Lys66, and Lys70. Thr79 carries the post-translational modification Phosphothreonine. Lys80 and Lys86 each carry N6-acetyllysine; alternate. Residues Lys80 and Lys86 each carry the N6-succinyllysine; alternate modification. Lys99 is modified (N6-acetyllysine).

Belongs to the GroES chaperonin family. As to quaternary structure, homoheptamer arranged in a ring structure. 2 heptameric Hsp10 rings interact with a Hsp60 tetradecamer in the structure of a back-to-back double heptameric ring to form the symmetrical football complex.

Its subcellular location is the mitochondrion matrix. In terms of biological role, co-chaperonin implicated in mitochondrial protein import and macromolecular assembly. Together with Hsp60, facilitates the correct folding of imported proteins. May also prevent misfolding and promote the refolding and proper assembly of unfolded polypeptides generated under stress conditions in the mitochondrial matrix. The functional units of these chaperonins consist of heptameric rings of the large subunit Hsp60, which function as a back-to-back double ring. In a cyclic reaction, Hsp60 ring complexes bind one unfolded substrate protein per ring, followed by the binding of ATP and association with 2 heptameric rings of the co-chaperonin Hsp10. This leads to sequestration of the substrate protein in the inner cavity of Hsp60 where, for a certain period of time, it can fold undisturbed by other cell components. Synchronous hydrolysis of ATP in all Hsp60 subunits results in the dissociation of the chaperonin rings and the release of ADP and the folded substrate protein. This Bos taurus (Bovine) protein is 10 kDa heat shock protein, mitochondrial (HSPE1).